We begin with the raw amino-acid sequence, 190 residues long: Heme-binding protein 1 (190 aa).

It belongs to the HEBP family. As to quaternary structure, monomer.

The protein resides in the cytoplasm. In terms of biological role, may bind free porphyrinogens that may be present in the cell and thus facilitate removal of these potentially toxic compound. Binds with a high affinity to one molecule of heme or porphyrins. It binds metalloporphyrins, free porphyrins and N-methylprotoporphyrin with similar affinities. The chain is Heme-binding protein 1 (hebp1) from Xenopus tropicalis (Western clawed frog).